We begin with the raw amino-acid sequence, 536 residues long: Phosphoenolpyruvate carboxykinase (ATP) (536 aa).

Positions 62, 203, and 209 each coordinate substrate. ATP-binding positions include K209, H228, and 244 to 252 (GLSGTGKTT). Positions 209 and 228 each coordinate Mn(2+). Residue D265 participates in Mn(2+) binding. ATP contacts are provided by residues E293, R329, 445 to 446 (RI), and T451. R329 contributes to the substrate binding site.

It belongs to the phosphoenolpyruvate carboxykinase (ATP) family. As to quaternary structure, monomer. The cofactor is Mn(2+).

Its subcellular location is the cytoplasm. The enzyme catalyses oxaloacetate + ATP = phosphoenolpyruvate + ADP + CO2. It participates in carbohydrate biosynthesis; gluconeogenesis. Its function is as follows. Involved in the gluconeogenesis. Catalyzes the conversion of oxaloacetate (OAA) to phosphoenolpyruvate (PEP) through direct phosphoryl transfer between the nucleoside triphosphate and OAA. The polypeptide is Phosphoenolpyruvate carboxykinase (ATP) (Glaesserella parasuis serovar 5 (strain SH0165) (Haemophilus parasuis)).